The chain runs to 634 residues: DNA gyrase subunit B (634 aa).

An ATPase domain region spans residues 1-220; that stretch reads MSYDASAIRV…EEVFLDKGGV (220 aa). The segment at 221-390 is transducer domain; sequence ASFAKALAEG…EAARKARELV (170 aa). The Toprim domain maps to 416-534; that stretch reads AELFIVEGDS…RGHVYIAQPP (119 aa). The Mg(2+) site is built by E422, D499, and D501.

Belongs to the type II topoisomerase GyrB family. Heterotetramer, composed of two GyrA and two GyrB chains. Non-hydrolyzable ATP analogs induce dimerization, novobiocin also induces a small amount of dimerization. The two subunits form an intertwined dimer where the GyrB ATPase transducer helix of 1 subunit connects to the Toprim domain of the other GyrB subunit through a 10 residue linker. In the heterotetramer, GyrA contains the active site tyrosine that forms a covalent intermediate with the DNA, while GyrB binds cofactors and catalyzes ATP hydrolysis. It depends on Mg(2+) as a cofactor. The cofactor is Mn(2+). Requires Ca(2+) as cofactor.

Its subcellular location is the cytoplasm. It catalyses the reaction ATP-dependent breakage, passage and rejoining of double-stranded DNA.. In terms of biological role, a type II topoisomerase that negatively supercoils closed circular double-stranded (ds) DNA in an ATP-dependent manner. It probably also catalyzes the interconversion of other topological isomers of double-stranded DNA rings, including catenanes. Relaxes negatively supercoiled DNA in an ATP-independent manner. At comparable concentrations T.thermophilus gyrase does not introduce as many negative supercoils into DNA as the E.coli enzyme. Negative supercoiling favors strand separation, and DNA replication, transcription, recombination and repair, all of which involve strand separation. Type II topoisomerases break and join 2 DNA strands simultaneously in an ATP-dependent manner. The protein is DNA gyrase subunit B of Thermus thermophilus (strain ATCC 27634 / DSM 579 / HB8).